Here is a 76-residue protein sequence, read N- to C-terminus: DNA-directed RNA polymerase subunit epsilon (76 aa).

The protein belongs to the RNA polymerase subunit epsilon family. As to quaternary structure, RNAP is composed of a core of 2 alpha, a beta and a beta' subunit. The core is associated with a delta subunit, and at least one of epsilon or omega. When a sigma factor is associated with the core the holoenzyme is formed, which can initiate transcription.

It catalyses the reaction RNA(n) + a ribonucleoside 5'-triphosphate = RNA(n+1) + diphosphate. A non-essential component of RNA polymerase (RNAP). This is DNA-directed RNA polymerase subunit epsilon from Streptococcus gordonii (strain Challis / ATCC 35105 / BCRC 15272 / CH1 / DL1 / V288).